We begin with the raw amino-acid sequence, 146 residues long: Large ribosomal subunit protein uL15 (146 aa).

The interval 1–52 is disordered; sequence MKLSNLSPKAGSKKRRRRVGRGIAAGQGASCGFGMRGQKSRSGTGTKAGFEG. Over residues 11–20 the composition is skewed to basic residues; the sequence is GSKKRRRRVG. Gly residues predominate over residues 23–35; the sequence is IAAGQGASCGFGM.

Belongs to the universal ribosomal protein uL15 family. As to quaternary structure, part of the 50S ribosomal subunit.

Functionally, binds to the 23S rRNA. In Picosynechococcus sp. (strain ATCC 27264 / PCC 7002 / PR-6) (Agmenellum quadruplicatum), this protein is Large ribosomal subunit protein uL15.